A 370-amino-acid chain; its full sequence is MKTLADVFREALKEKGISSIGTLSKRFRKSKNKLQDIAIEIVHGKGAVFRVPEKTAVAWDLNGNRVDGSYYAYAPLCMREKFEPVLTPEELREKLPDWPYFIIDLYHWDKHTQKEKGKICLQVNQSYGLLRDYFTGSELAVTWANEEFREMFHGPLDRITTYGGPTSEFLKENGINEVVLLDPWAEEVLSEKDFDVKAFIIGGIVDTGGNKKKTTPKIGEELESAGIKVRRRKIVLRGDVVGVPDRINRILGIILKMMVEGKSMDEAVYEMQEPLHARWRLRKELPKRATRYMVEGKVYRVVEKELFDEYSKWLKIRWEDFVKVLRELDLVALERKRIHHLNKISNARIINGKLHRVILLKRAAMLCYNC.

The SAM-dependent MTase TRM10-type domain occupies 87–292; it reads TPEELREKLP…KELPKRATRY (206 aa).

The protein belongs to the class IV-like SAM-binding methyltransferase superfamily. TRM10 family.

Its subcellular location is the cytoplasm. It catalyses the reaction adenosine(9) in tRNA + S-adenosyl-L-methionine = N(1)-methyladenosine(9) in tRNA + S-adenosyl-L-homocysteine + H(+). It carries out the reaction guanosine(9) in tRNA + S-adenosyl-L-methionine = N(1)-methylguanosine(9) in tRNA + S-adenosyl-L-homocysteine + H(+). Catalyzes the S-adenosyl-L-methionine-dependent formation of either N(1)-methyladenine or N(1)-methylguanine at position 9 (m1A9 or m1G9) in tRNA. The protein is tRNA (guanine(9)-/adenine(9)-N1)-methyltransferase of Thermococcus kodakarensis (strain ATCC BAA-918 / JCM 12380 / KOD1) (Pyrococcus kodakaraensis (strain KOD1)).